Here is an 878-residue protein sequence, read N- to C-terminus: Splicing factor 3B subunit 2 (878 aa).

Basic and acidic residues predominate over residues 1-10 (MAAEHPEPPK). Disordered stretches follow at residues 1 to 25 (MAAE…GHYG) and 67 to 136 (RPVL…LRVG). Residue K10 forms a Glycyl lysine isopeptide (Lys-Gly) (interchain with G-Cter in SUMO2) linkage. In terms of domain architecture, SAP spans 24–58 (YGAWAAQELQARLAEIGAPIQGSREELVERLQTYT). Composition is skewed to pro residues over residues 91–114 (PMPP…PPPG) and 122–133 (AHPPNLGPPPPL). A coiled-coil region spans residues 140–177 (ALSEEERLKLAQQQAALLMQQEERAKQAAVLMEQERQQ). 2 disordered regions span residues 183–356 (GTAV…EYVT) and 383–436 (KKEK…SKKK). Low complexity predominate over residues 201–221 (PLGPRVAAPVGPVVPTPTVLP). An omega-N-methylarginine mark is found at R205, R228, and R230. Residues 224-237 (APVPRPRGPPPPPG) are compositionally biased toward pro residues. N6-acetyllysine is present on K258. Residues 260–269 (LQLKESRQEE) are compositionally biased toward basic and acidic residues. K263 is covalently cross-linked (Glycyl lysine isopeptide (Lys-Gly) (interchain with G-Cter in SUMO2)). At S272 the chain carries Phosphoserine. T281 carries the post-translational modification Phosphothreonine. Residues S290 and S292 each carry the phosphoserine modification. T294 is subject to Phosphothreonine. S300 carries the phosphoserine modification. The segment covering 305–321 (EKNRKRRNRKKKKKPQR) has biased composition (basic residues). Basic and acidic residues predominate over residues 330 to 342 (SGDREKDSGRSRG). Residue S343 is modified to Phosphoserine. Residues K383 and K395 each participate in a glycyl lysine isopeptide (Lys-Gly) (interchain with G-Cter in SUMO2) cross-link. 2 stretches are compositionally biased toward basic and acidic residues: residues 383-397 (KKEK…DKME) and 405-414 (KGFEEEHKDS). The tract at residues 384-533 (KEKEKEPEKL…QEKEEQKTMK (150 aa)) is required for interaction with PRMT9. A phosphoserine mark is found at S414, S418, and S419. K475 is covalently cross-linked (Glycyl lysine isopeptide (Lys-Gly) (interchain with G-Cter in SUMO2)). 2 positions are modified to omega-N-methylarginine: R491 and R498. R491 is modified (symmetric dimethylarginine). K526 participates in a covalent cross-link: Glycyl lysine isopeptide (Lys-Gly) (interchain with G-Cter in SUMO2). The segment at 674–740 (AAEFQTKTEE…PGGFSSVPAG (67 aa)) is disordered. Over residues 695 to 715 (EPSDEESSEEEEEEESDEDKP) the composition is skewed to acidic residues. A Glycyl lysine isopeptide (Lys-Gly) (interchain with G-Cter in SUMO2) cross-link involves residue K753. T763 carries the post-translational modification Phosphothreonine. Residues K773, K826, and K840 each participate in a glycyl lysine isopeptide (Lys-Gly) (interchain with G-Cter in SUMO2) cross-link. The span at 827–852 (YEEHVREQQAQVEKEDFSDMVAEHAA) shows a compositional bias: basic and acidic residues. Residues 827 to 878 (YEEHVREQQAQVEKEDFSDMVAEHAAKQKQKKRKAQPQDSRGGSKKYKEFKF) are disordered. Residue S844 is modified to Phosphoserine.

As to quaternary structure, component of the 17S U2 SnRNP complex, a ribonucleoprotein complex that contains small nuclear RNA (snRNA) U2 and a number of specific proteins. Part of the SF3B subcomplex of the 17S U2 SnRNP complex. SF3B associates with the splicing subcomplex SF3A and a 12S RNA unit to form the U2 small nuclear ribonucleoproteins complex (U2 snRNP). Within the SF3B complex, interacts directly with SF3B4. Found in a complex with PRMT9, SF3B2 and SF3B4. Interacts (Arg-491-methylated form) with SMN1 (via Tudor domain). Interacts with RBM7. Interacts with ERCC6. Component of the minor spliceosome. Within this complex, interacts with SCNM1 and CRIPT. Methylation at Arg-491 by PRMT9 is required for the interaction with SMN1.

The protein resides in the nucleus. The protein localises to the nucleus speckle. Its function is as follows. Component of the 17S U2 SnRNP complex of the spliceosome, a large ribonucleoprotein complex that removes introns from transcribed pre-mRNAs. The 17S U2 SnRNP complex (1) directly participates in early spliceosome assembly and (2) mediates recognition of the intron branch site during pre-mRNA splicing by promoting the selection of the pre-mRNA branch-site adenosine, the nucleophile for the first step of splicing. Within the 17S U2 SnRNP complex, SF3B2 is part of the SF3B subcomplex, which is required for 'A' complex assembly formed by the stable binding of U2 snRNP to the branchpoint sequence in pre-mRNA. Sequence independent binding of SF3A and SF3B subcomplexes upstream of the branch site is essential, it may anchor U2 snRNP to the pre-mRNA. May also be involved in the assembly of the 'E' complex. Also acts as a component of the minor spliceosome, which is involved in the splicing of U12-type introns in pre-mRNAs. This Mus musculus (Mouse) protein is Splicing factor 3B subunit 2.